Here is a 240-residue protein sequence, read N- to C-terminus: MORN repeat-containing protein 3 (240 aa).

Positions Cys6 to Gly35 are interaction with MDM2. 7 MORN repeats span residues Tyr38–Ala60, Tyr62–Thr84, Tyr91–Tyr113, Tyr114–Ile136, Tyr137–Arg159, Tyr160–Gln182, and Phe184–Glu205. Residues Thr76–Lys100 form an interaction with SIRT1 region. The interval Ala206–Asp240 is interaction with TP53.

In terms of assembly, interacts with MEIG1. Interacts with TP53, MDM2 and SIRT1; the interactions mediate post-transcriptional modifications of TP53 by MDM2 and SIRT1.

The protein localises to the cytoplasmic vesicle. It is found in the secretory vesicle. Its subcellular location is the acrosome. In terms of biological role, assembles a suppression complex (suppresome) by tethering SIRT1 and MDM2 to regulate composite modifications of p53/TP53. Confers both deacetylation-mediated functional inactivation, by SIRT1, and ubiquitination-dependent degradation, by MDM2, of p53/TP53, promoting a proliferative and cell survival behaviors. May play a role in the regulation of spermatogenesis. This is MORN repeat-containing protein 3 (MORN3) from Macaca fascicularis (Crab-eating macaque).